The following is a 243-amino-acid chain: R-spondin-2 (243 aa).

The N-terminal stretch at 1-21 is a signal peptide; the sequence is MQFQLFSFALIILNCVDYSHC. Disulfide bonds link C40–C46, C43–C52, C55–C74, C78–C93, C96–C104, C101–C110, C113–C124, C128–C141, C145–C187, C156–C163, and C196–C203. The stretch at 90–134 is one FU repeat; it reads MNRCSRCRIENCDSCFSRDFCIKCKSGFYSLKGQCFEECPEGFAP. One can recognise a TSP type-1 domain in the interval 144-204; sequence GCEVGPWSEW…RCKMAIRHCP (61 aa). A glycan (N-linked (GlcNAc...) asparagine) is linked at N160. Over residues 204 to 224 the composition is skewed to basic residues; it reads PGGKRTTKKKDKRNKKKKKKL. The disordered stretch occupies residues 204–243; the sequence is PGGKRTTKKKDKRNKKKKKKLLERAQEQHSVVLATDRSSQ.

Belongs to the R-spondin family. In terms of assembly, binds heparin.

It is found in the secreted. Activator of the canonical Wnt signaling pathway by acting as a ligand for lgr4-6 receptors. Upon binding to lgr4-6 (lgr4, lgr5 or lgr6), lgr4-6 associate with phosphorylated lrp6 and frizzled receptors that are activated by extracellular Wnt receptors, triggering the canonical Wnt signaling pathway to increase expression of target genes. Acts both in the canonical Wnt/beta-catenin-dependent pathway and in non-canonical Wnt signaling pathway. Activates neural markers and promotes muscle formation. Overexpression blocks activin, nodal and BMP4 signaling, suggesting that it may negatively regulate the TGF-beta pathway. During embryonic development, plays a crucial role in limb specification, amplifying the Wnt signaling pathway independently of LGR4-6 receptors, possibly by acting as a direct antagonistic ligand to RNF43 and ZNRF3, hence governing the number of limbs an embryo should form. The chain is R-spondin-2 (rspo2) from Xenopus laevis (African clawed frog).